A 584-amino-acid polypeptide reads, in one-letter code: uncharacterized protein (584 aa).

Disordered regions lie at residues Leu-123 to Pro-156, Lys-209 to Gly-264, and Ser-355 to Thr-479. 2 stretches are compositionally biased toward low complexity: residues Ser-237–Ser-260 and Ser-366–Thr-376. Polar residues-rich tracts occupy residues Pro-377–Thr-388 and Asp-395–Pro-419. A compositionally biased stretch (low complexity) spans Met-425–Thr-479.

This is an uncharacterized protein from Dictyostelium discoideum (Social amoeba).